The following is an 873-amino-acid chain: Leucine--tRNA ligase (873 aa).

The 'HIGH' region motif lies at 42 to 52; the sequence is PYPSGKLHMGH. The disordered stretch occupies residues 624–643; the sequence is PVEIGGTEKMSKSKNNGVDP. Residues 632-636 carry the 'KMSKS' region motif; it reads KMSKS. Lys-635 provides a ligand contact to ATP.

The protein belongs to the class-I aminoacyl-tRNA synthetase family.

The protein localises to the cytoplasm. It carries out the reaction tRNA(Leu) + L-leucine + ATP = L-leucyl-tRNA(Leu) + AMP + diphosphate. This chain is Leucine--tRNA ligase, found in Pseudomonas paraeruginosa (strain DSM 24068 / PA7) (Pseudomonas aeruginosa (strain PA7)).